The following is a 119-amino-acid chain: Hydrogenase maturation factor HypA (119 aa).

Residue His-2 coordinates Ni(2+). 4 residues coordinate Zn(2+): Cys-73, Cys-76, Cys-89, and Cys-92.

Belongs to the HypA/HybF family.

Involved in the maturation of [NiFe] hydrogenases. Required for nickel insertion into the metal center of the hydrogenase. The chain is Hydrogenase maturation factor HypA from Cupriavidus necator (strain ATCC 17699 / DSM 428 / KCTC 22496 / NCIMB 10442 / H16 / Stanier 337) (Ralstonia eutropha).